We begin with the raw amino-acid sequence, 87 residues long: MMMKFINIGYGNMVSAARIITIVSPDSAPIKRIIQDAREKGKLVDATHGRRTRAVIITDSDHVILSSVQPETVANRLYGSDDFSEEG.

This sequence belongs to the RemA family.

The sequence is that of Putative regulatory protein GTNG_1019 from Geobacillus thermodenitrificans (strain NG80-2).